We begin with the raw amino-acid sequence, 522 residues long: Protein nucleotidyltransferase YdiU (522 aa).

ATP contacts are provided by Gly109, Gly111, Arg112, Lys132, Asp144, Gly145, Arg195, and Arg202. The Proton acceptor role is filled by Asp271. Positions 272 and 281 each coordinate Mg(2+). Asp281 contacts ATP.

Belongs to the SELO family. Mg(2+) serves as cofactor. Mn(2+) is required as a cofactor.

It carries out the reaction L-seryl-[protein] + ATP = 3-O-(5'-adenylyl)-L-seryl-[protein] + diphosphate. The catalysed reaction is L-threonyl-[protein] + ATP = 3-O-(5'-adenylyl)-L-threonyl-[protein] + diphosphate. It catalyses the reaction L-tyrosyl-[protein] + ATP = O-(5'-adenylyl)-L-tyrosyl-[protein] + diphosphate. The enzyme catalyses L-histidyl-[protein] + UTP = N(tele)-(5'-uridylyl)-L-histidyl-[protein] + diphosphate. It carries out the reaction L-seryl-[protein] + UTP = O-(5'-uridylyl)-L-seryl-[protein] + diphosphate. The catalysed reaction is L-tyrosyl-[protein] + UTP = O-(5'-uridylyl)-L-tyrosyl-[protein] + diphosphate. Functionally, nucleotidyltransferase involved in the post-translational modification of proteins. It can catalyze the addition of adenosine monophosphate (AMP) or uridine monophosphate (UMP) to a protein, resulting in modifications known as AMPylation and UMPylation. The sequence is that of Protein nucleotidyltransferase YdiU from Burkholderia vietnamiensis (strain G4 / LMG 22486) (Burkholderia cepacia (strain R1808)).